A 1064-amino-acid polypeptide reads, in one-letter code: DNA-directed RNA polymerase subunit beta (1064 aa).

The protein belongs to the RNA polymerase beta chain family. In terms of assembly, in plastids the minimal PEP RNA polymerase catalytic core is composed of four subunits: alpha, beta, beta', and beta''. When a (nuclear-encoded) sigma factor is associated with the core the holoenzyme is formed, which can initiate transcription.

The protein resides in the plastid. It is found in the chloroplast. It catalyses the reaction RNA(n) + a ribonucleoside 5'-triphosphate = RNA(n+1) + diphosphate. Its function is as follows. DNA-dependent RNA polymerase catalyzes the transcription of DNA into RNA using the four ribonucleoside triphosphates as substrates. This chain is DNA-directed RNA polymerase subunit beta, found in Jasminum nudiflorum (Winter jasmine).